A 194-amino-acid polypeptide reads, in one-letter code: Protein GrpE (194 aa).

Over residues 1-12 (MNKQKNNRERTP) the composition is skewed to basic and acidic residues. A disordered region spans residues 1–44 (MNKQKNNRERTPQPEQDTERDEQLTNSHENDIDSAPAAEENDKV).

It belongs to the GrpE family. Homodimer.

It localises to the cytoplasm. Its function is as follows. Participates actively in the response to hyperosmotic and heat shock by preventing the aggregation of stress-denatured proteins, in association with DnaK and GrpE. It is the nucleotide exchange factor for DnaK and may function as a thermosensor. Unfolded proteins bind initially to DnaJ; upon interaction with the DnaJ-bound protein, DnaK hydrolyzes its bound ATP, resulting in the formation of a stable complex. GrpE releases ADP from DnaK; ATP binding to DnaK triggers the release of the substrate protein, thus completing the reaction cycle. Several rounds of ATP-dependent interactions between DnaJ, DnaK and GrpE are required for fully efficient folding. This chain is Protein GrpE, found in Porphyromonas gingivalis (strain ATCC BAA-308 / W83).